Here is a 260-residue protein sequence, read N- to C-terminus: 3'-5' ssDNA/RNA exonuclease TatD (260 aa).

A divalent metal cation contacts are provided by E91, H127, and H152.

The protein belongs to the metallo-dependent hydrolases superfamily. TatD-type hydrolase family. TatD subfamily. In terms of assembly, monomer. Mg(2+) is required as a cofactor.

It localises to the cytoplasm. Functionally, 3'-5' exonuclease that prefers single-stranded DNA and RNA. May play a role in the H(2)O(2)-induced DNA damage repair. The protein is 3'-5' ssDNA/RNA exonuclease TatD of Enterobacter lignolyticus (strain SCF1).